The chain runs to 101 residues: Small ribosomal subunit protein uS14 (101 aa).

It belongs to the universal ribosomal protein uS14 family. In terms of assembly, part of the 30S ribosomal subunit. Contacts proteins S3 and S10.

Its function is as follows. Binds 16S rRNA, required for the assembly of 30S particles and may also be responsible for determining the conformation of the 16S rRNA at the A site. The polypeptide is Small ribosomal subunit protein uS14 (Burkholderia vietnamiensis (strain G4 / LMG 22486) (Burkholderia cepacia (strain R1808))).